The chain runs to 119 residues: uncharacterized protein (119 aa).

The segment at 78 to 119 (SHRKSQQHQTQGNQVLRGTRKLESPTVGPRPGLRRQHTRNFL) is disordered. Polar residues predominate over residues 84–93 (QHQTQGNQVL). Residues 109-119 (GLRRQHTRNFL) show a composition bias toward basic residues.

This is an uncharacterized protein from Saccharomyces cerevisiae (strain ATCC 204508 / S288c) (Baker's yeast).